The primary structure comprises 481 residues: Proline--tRNA ligase (481 aa).

This sequence belongs to the class-II aminoacyl-tRNA synthetase family. ProS type 3 subfamily. As to quaternary structure, homodimer.

It localises to the cytoplasm. It carries out the reaction tRNA(Pro) + L-proline + ATP = L-prolyl-tRNA(Pro) + AMP + diphosphate. In terms of biological role, catalyzes the attachment of proline to tRNA(Pro) in a two-step reaction: proline is first activated by ATP to form Pro-AMP and then transferred to the acceptor end of tRNA(Pro). The polypeptide is Proline--tRNA ligase (Chlorobaculum tepidum (strain ATCC 49652 / DSM 12025 / NBRC 103806 / TLS) (Chlorobium tepidum)).